The following is a 136-amino-acid chain: Large-conductance mechanosensitive channel (136 aa).

2 consecutive transmembrane segments (helical) span residues 10–30 and 76–96; these read FAMR…AAFG and GVFI…FMAI.

It belongs to the MscL family. Homopentamer.

The protein resides in the cell inner membrane. Its function is as follows. Channel that opens in response to stretch forces in the membrane lipid bilayer. May participate in the regulation of osmotic pressure changes within the cell. The protein is Large-conductance mechanosensitive channel of Escherichia coli O139:H28 (strain E24377A / ETEC).